A 175-amino-acid chain; its full sequence is uncharacterized protein (175 aa).

A compositionally biased stretch (basic and acidic residues) spans 1–17; the sequence is MKVEGGESMHESEEGRD. The disordered stretch occupies residues 1–21; sequence MKVEGGESMHESEEGRDVPNG.

This is an uncharacterized protein from Bacillus thuringiensis subsp. kurstaki.